Reading from the N-terminus, the 347-residue chain is Geranylgeranyl pyrophosphate synthase 7, chloroplastic (347 aa).

The N-terminal 39 residues, 1-39, are a transit peptide targeting the chloroplast; the sequence is MTTLNLSIFPSVKISSSASIPGFIKIQPFLLRRKLSTVL. Residues K95, R98, and H127 each coordinate isopentenyl diphosphate. 2 residues coordinate Mg(2+): D134 and D140. R145 is a binding site for dimethylallyl diphosphate. R146 contacts isopentenyl diphosphate. 5 residues coordinate dimethylallyl diphosphate: K232, T233, Q270, K287, and K297.

The protein belongs to the FPP/GGPP synthase family. As to quaternary structure, monomer. It depends on Mg(2+) as a cofactor.

It localises to the plastid. The protein resides in the chloroplast. The catalysed reaction is isopentenyl diphosphate + dimethylallyl diphosphate = (2E)-geranyl diphosphate + diphosphate. The enzyme catalyses isopentenyl diphosphate + (2E)-geranyl diphosphate = (2E,6E)-farnesyl diphosphate + diphosphate. It carries out the reaction isopentenyl diphosphate + (2E,6E)-farnesyl diphosphate = (2E,6E,10E)-geranylgeranyl diphosphate + diphosphate. The protein operates within isoprenoid biosynthesis; farnesyl diphosphate biosynthesis; farnesyl diphosphate from geranyl diphosphate and isopentenyl diphosphate: step 1/1. It functions in the pathway isoprenoid biosynthesis; geranyl diphosphate biosynthesis; geranyl diphosphate from dimethylallyl diphosphate and isopentenyl diphosphate: step 1/1. It participates in isoprenoid biosynthesis; geranylgeranyl diphosphate biosynthesis; geranylgeranyl diphosphate from farnesyl diphosphate and isopentenyl diphosphate: step 1/1. Its function is as follows. Catalyzes the trans-addition of the three molecules of IPP onto DMAPP to form geranylgeranyl pyrophosphate. The sequence is that of Geranylgeranyl pyrophosphate synthase 7, chloroplastic from Arabidopsis thaliana (Mouse-ear cress).